Here is a 77-residue protein sequence, read N- to C-terminus: Small ribosomal subunit protein uS17 (77 aa).

It belongs to the universal ribosomal protein uS17 family. As to quaternary structure, part of the 30S ribosomal subunit.

In terms of biological role, one of the primary rRNA binding proteins, it binds specifically to the 5'-end of 16S ribosomal RNA. In Rickettsia akari (strain Hartford), this protein is Small ribosomal subunit protein uS17.